Here is a 137-residue protein sequence, read N- to C-terminus: Recombination protein uvsY (137 aa).

In terms of assembly, homohexamer. Interacts with gp32.

Its function is as follows. Plays a role in viral DNA synthesis by promoting enzymatic activities of UvsX recombinase, by promoting UvsX-ssDNA filament assembly, and by helping UvsX to displace bound gp32 from ssDNA. In Escherichia coli (Bacteriophage T4), this protein is Recombination protein uvsY (uvsY).